Consider the following 1162-residue polypeptide: DNA-directed RNA polymerase subunit beta 1 (1162 aa).

This sequence belongs to the RNA polymerase beta chain family. The RNAP catalytic core consists of 2 alpha, 1 beta, 1 beta' and 1 omega subunit. When a sigma factor is associated with the core the holoenzyme is formed, which can initiate transcription.

The catalysed reaction is RNA(n) + a ribonucleoside 5'-triphosphate = RNA(n+1) + diphosphate. DNA-dependent RNA polymerase catalyzes the transcription of DNA into RNA using the four ribonucleoside triphosphates as substrates. In Nocardia farcinica (strain IFM 10152), this protein is DNA-directed RNA polymerase subunit beta 1.